Consider the following 116-residue polypeptide: Small ribosomal subunit protein uS10m (116 aa).

Belongs to the universal ribosomal protein uS10 family.

It localises to the mitochondrion. The polypeptide is Small ribosomal subunit protein uS10m (RPS10) (Reclinomonas americana).